The following is a 1113-amino-acid chain: StAR-related lipid transfer protein 13 (1113 aa).

Methionine 1 is modified (N-acetylmethionine). The SAM domain occupies 55 to 122; the sequence is QQEIEAKEAC…LNKCASMRLD (68 aa). Disordered stretches follow at residues 164 to 218, 230 to 256, and 308 to 343; these read PVAD…HSAD, SSLP…RTRA, and NGDL…STVS. Residues 179–188 are compositionally biased toward polar residues; the sequence is NTASSESVLT. A compositionally biased stretch (low complexity) spans 197–214; sequence SIHSESSGGSDSRSQSGH. Over residues 230-245 the composition is skewed to polar residues; sequence SSLPQSTREGLNQSFH. Residues 322–340 are compositionally biased toward low complexity; that stretch reads GLPCSSKSSGESSPLENSS. At serine 411 the chain carries Phosphoserine. Composition is skewed to polar residues over residues 421 to 435 and 529 to 549; these read SNGV…SLGR and PNQV…TTPS. Disordered regions lie at residues 421–443 and 514–578; these read SNGV…GMRE and HSTL…GASL. One can recognise a Rho-GAP domain in the interval 663 to 868; sequence VPLIVHVQRT…HMITECNRLF (206 aa). One can recognise an START domain in the interval 899-1109; it reads LAESGATFHT…SFQPLVAEGP (211 aa).

Homodimer. Interacts with TAX1BP1.

It localises to the cytoplasm. The protein localises to the membrane. It is found in the mitochondrion membrane. Its subcellular location is the lipid droplet. Functionally, may function as a GTPase-activating protein. The sequence is that of StAR-related lipid transfer protein 13 (Stard13) from Mus musculus (Mouse).